Here is a 330-residue protein sequence, read N- to C-terminus: Probable allantoicase (330 aa).

This sequence belongs to the allantoicase family.

It catalyses the reaction allantoate + H2O = (S)-ureidoglycolate + urea. The protein operates within nitrogen metabolism; (S)-allantoin degradation; (S)-ureidoglycolate from allantoate (aminidohydrolase route): step 1/1. The chain is Probable allantoicase from Photobacterium profundum (strain SS9).